We begin with the raw amino-acid sequence, 330 residues long: Tetraacyldisaccharide 4'-kinase (330 aa).

58–65 (TVGGSGKT) serves as a coordination point for ATP.

It belongs to the LpxK family.

It catalyses the reaction a lipid A disaccharide + ATP = a lipid IVA + ADP + H(+). The protein operates within glycolipid biosynthesis; lipid IV(A) biosynthesis; lipid IV(A) from (3R)-3-hydroxytetradecanoyl-[acyl-carrier-protein] and UDP-N-acetyl-alpha-D-glucosamine: step 6/6. Its function is as follows. Transfers the gamma-phosphate of ATP to the 4'-position of a tetraacyldisaccharide 1-phosphate intermediate (termed DS-1-P) to form tetraacyldisaccharide 1,4'-bis-phosphate (lipid IVA). In Shewanella pealeana (strain ATCC 700345 / ANG-SQ1), this protein is Tetraacyldisaccharide 4'-kinase.